Reading from the N-terminus, the 113-residue chain is MSIPVMQLKHELALKAREEYLRKELPLKVRANTSRMNPGAKTWIPQINHRKSRNHYNRKETCQFPPLYNVEAKINHSYSAFYRPFTKRENGLWYANPYYMQHGPNGNYHHVYY.

Its subcellular location is the mitochondrion. Has a role in meiosis. In Schizosaccharomyces pombe (strain 972 / ATCC 24843) (Fission yeast), this protein is Meiotically up-regulated gene 98 protein, mitochondrial (mug98).